We begin with the raw amino-acid sequence, 119 residues long: Beta-2-microglobulin (119 aa).

The N-terminal stretch at 1-20 is a signal peptide; it reads MARFVVVALLVLLSLSGLEA. Residues 25–114 form the Ig-like C1-type domain; sequence PKIQVYSRHP…VTLSTPKTVK (90 aa). The cysteines at positions 45 and 100 are disulfide-linked.

This sequence belongs to the beta-2-microglobulin family. Heterodimer of an alpha chain and a beta chain. Beta-2-microglobulin is the beta-chain of major histocompatibility complex class I molecules.

The protein resides in the secreted. Its function is as follows. Component of the class I major histocompatibility complex (MHC). Involved in the presentation of peptide antigens to the immune system. In Aotus azarae (Azara's night monkey), this protein is Beta-2-microglobulin (B2M).